The sequence spans 234 residues: MLTYETWKENSVSFSEEDETKGALSVLSWAYNEYKDEIVYACSFGVEGMVLLHLINQVNPSAKVVFLDTNVHFQETYELIKKVRERFPSLNIIEKQPELTLDEQAKLHGEKLWESNPNLCCSIRKILPLEKSLAAEKAWISGLRREQSETRKHTQFINQDRRFQSIKVCPLIHWTWKEVWRYVYKHSLPYNPLHDVGYPSIGCEKCTLPVGDGGNSRDGRWAGKMKTECGLHFQ.

Cys120, Cys121, Cys203, and Cys206 together coordinate [4Fe-4S] cluster. Residue Cys229 is the Nucleophile; cysteine thiosulfonate intermediate of the active site.

This sequence belongs to the PAPS reductase family. CysH subfamily. [4Fe-4S] cluster serves as cofactor.

Its subcellular location is the cytoplasm. The catalysed reaction is [thioredoxin]-disulfide + sulfite + AMP + 2 H(+) = adenosine 5'-phosphosulfate + [thioredoxin]-dithiol. The protein operates within sulfur metabolism; hydrogen sulfide biosynthesis; sulfite from sulfate. Its function is as follows. Catalyzes the formation of sulfite from adenosine 5'-phosphosulfate (APS) using thioredoxin as an electron donor. This chain is Adenosine 5'-phosphosulfate reductase, found in Bacillus mycoides (strain KBAB4) (Bacillus weihenstephanensis).